Reading from the N-terminus, the 187-residue chain is MTHILFAVLVLALLALAFGIILGFAAVKFHVEADPIVDQLDALLPQTQCGQCGYPGCKPYAEALANGDQINKCVPGGDATMRKIADLMGVEPQPLGGAEAAAPIKKVAFIHEDQCIGCTKCIQACPVDAIVGATKAMHTVIADECTGCDLCVDPCPTDCIEMIPVPTTVDNWKWDLANVAIPVKIVE.

Residues 1-26 (MTHILFAVLVLALLALAFGIILGFAA) are hydrophobic. The 4Fe-4S domain occupies 32-90 (EADPIVDQLDALLPQTQCGQCGYPGCKPYAEALANGDQINKCVPGGDATMRKIADLMGV). Cys-49, Cys-52, Cys-57, Cys-73, Cys-115, Cys-118, Cys-121, Cys-125, Cys-145, Cys-148, Cys-151, and Cys-155 together coordinate [4Fe-4S] cluster. 4Fe-4S ferredoxin-type domains lie at 106–135 (KVAFIHEDQCIGCTKCIQACPVDAIVGATK) and 136–165 (AMHTVIADECTGCDLCVDPCPTDCIEMIPV).

The protein belongs to the 4Fe4S bacterial-type ferredoxin family. RnfB subfamily. The complex is composed of six subunits: RnfA, RnfB, RnfC, RnfD, RnfE and RnfG. [4Fe-4S] cluster serves as cofactor.

It is found in the cell inner membrane. Functionally, part of a membrane-bound complex that couples electron transfer with translocation of ions across the membrane. This is Ion-translocating oxidoreductase complex subunit B from Aeromonas hydrophila subsp. hydrophila (strain ATCC 7966 / DSM 30187 / BCRC 13018 / CCUG 14551 / JCM 1027 / KCTC 2358 / NCIMB 9240 / NCTC 8049).